The sequence spans 396 residues: Ubiquitin-like modifier-activating enzyme 5 (396 aa).

Residues Gly-76, Asp-97, Lys-120, Asn-143, and Asn-177 each contribute to the ATP site. Residues Cys-219 and Cys-222 each contribute to the Zn(2+) site. Catalysis depends on Cys-243, which acts as the Glycyl thioester intermediate. Residues Cys-296 and Cys-301 each contribute to the Zn(2+) site.

It belongs to the ubiquitin-activating E1 family. UBA5 subfamily.

Functionally, E1-like enzyme which activates UFM1. The polypeptide is Ubiquitin-like modifier-activating enzyme 5 (Drosophila ananassae (Fruit fly)).